Consider the following 45-residue polypeptide: Defensin Tk-AMP-D4 (45 aa).

Cystine bridges form between Cys3–Cys45, Cys14–Cys34, Cys20–Cys39, and Cys24–Cys41.

Functionally, plant defense peptide. The polypeptide is Defensin Tk-AMP-D4 (Triticum kiharae (Wheat)).